The primary structure comprises 350 residues: Anthranilate phosphoribosyltransferase (350 aa).

Residues Gly-82, 85–86, Ser-90, 92–95, 110–118, and Gly-122 each bind 5-phospho-alpha-D-ribose 1-diphosphate; these read GD, NVST, and KHGNRAVTG. Residue Gly-82 coordinates anthranilate. Residue Ser-94 coordinates Mg(2+). Asn-113 contributes to the anthranilate binding site. Arg-168 contacts anthranilate. 2 residues coordinate Mg(2+): Asp-232 and Glu-233.

Belongs to the anthranilate phosphoribosyltransferase family. In terms of assembly, homodimer. It depends on Mg(2+) as a cofactor.

It catalyses the reaction N-(5-phospho-beta-D-ribosyl)anthranilate + diphosphate = 5-phospho-alpha-D-ribose 1-diphosphate + anthranilate. Its pathway is amino-acid biosynthesis; L-tryptophan biosynthesis; L-tryptophan from chorismate: step 2/5. Its function is as follows. Catalyzes the transfer of the phosphoribosyl group of 5-phosphorylribose-1-pyrophosphate (PRPP) to anthranilate to yield N-(5'-phosphoribosyl)-anthranilate (PRA). In Methanothermobacter marburgensis (strain ATCC BAA-927 / DSM 2133 / JCM 14651 / NBRC 100331 / OCM 82 / Marburg) (Methanobacterium thermoautotrophicum), this protein is Anthranilate phosphoribosyltransferase.